A 172-amino-acid chain; its full sequence is L-amino acid N-acyltransferase MnaT (172 aa).

The N-acetyltransferase domain maps to 1-163 (MSIRFARKAD…DLTFMQLQLD (163 aa)). Acetyl-CoA-binding positions include 85–87 (VYV), 93–98 (GKGLGR), asparagine 124, and serine 133.

The protein belongs to the acetyltransferase family. PAT/BAR subfamily.

The enzyme catalyses L-methionine + acetyl-CoA = N-acetyl-L-methionine + CoA + H(+). It carries out the reaction propanoyl-CoA + L-methionine = N-propanoyl-L-methioninate + CoA + H(+). It catalyses the reaction L-alpha-phenylglycine + acetyl-CoA = N-acetyl-L-alpha-phenylglycine + CoA + H(+). The catalysed reaction is L-methionine sulfoximine + acetyl-CoA = N-acetyl-L-methionine sulfoximine + CoA + H(+). The enzyme catalyses L-methionine sulfone + acetyl-CoA = N-acetyl-L-methionine sulfone + CoA + H(+). Acyltransferase that appears to be required for E.coli optimal growth rate and yield via the formation of N-acetylated amino acids. Catalyzes the acylation of L-methionine using acetyl-CoA or propanoyl-CoA as acyl donors, and the acetylation of L-phenylglycine. Is also able to N-acylate other free L-amino acids and their derivatives using a CoA thioester as cosubstrate. Using acetyl-CoA as an acyl donor, substrate specificity is methionine sulfone &gt; methionine sulfoximine &gt; methionine sulfoxide &gt; methionine. Asparagine, lysine, glutamine, aspartate and glutamate are very poor substrates. Using methionine as a substrate, acyl donor preference is propanoyl-CoA &gt; acetyl-CoA &gt;&gt; butyryl-CoA. Likely plays a role in the resistance against the toxic effects of L-methionine sulfoximine (MSX), via its ability to catalyze its acetylation; MSX is a rare amino acid which inhibits glutamine synthetase (GlnA). This Escherichia coli (strain K12) protein is L-amino acid N-acyltransferase MnaT.